A 267-amino-acid polypeptide reads, in one-letter code: 4-hydroxy-tetrahydrodipicolinate reductase (267 aa).

NAD(+) contacts are provided by residues Gly-8 to Met-13 and Asp-34. NADP(+) is bound at residue Arg-35. NAD(+) contacts are provided by residues Gly-98–Thr-100 and Ala-122–Phe-125. Residue His-155 is the Proton donor/acceptor of the active site. His-156 contributes to the (S)-2,3,4,5-tetrahydrodipicolinate binding site. The active-site Proton donor is Lys-159. Residue Gly-165–Thr-166 participates in (S)-2,3,4,5-tetrahydrodipicolinate binding.

The protein belongs to the DapB family.

It localises to the cytoplasm. It catalyses the reaction (S)-2,3,4,5-tetrahydrodipicolinate + NAD(+) + H2O = (2S,4S)-4-hydroxy-2,3,4,5-tetrahydrodipicolinate + NADH + H(+). The catalysed reaction is (S)-2,3,4,5-tetrahydrodipicolinate + NADP(+) + H2O = (2S,4S)-4-hydroxy-2,3,4,5-tetrahydrodipicolinate + NADPH + H(+). The protein operates within amino-acid biosynthesis; L-lysine biosynthesis via DAP pathway; (S)-tetrahydrodipicolinate from L-aspartate: step 4/4. Catalyzes the conversion of 4-hydroxy-tetrahydrodipicolinate (HTPA) to tetrahydrodipicolinate. The polypeptide is 4-hydroxy-tetrahydrodipicolinate reductase (Pseudomonas putida (strain ATCC 700007 / DSM 6899 / JCM 31910 / BCRC 17059 / LMG 24140 / F1)).